The following is a 353-amino-acid chain: Putrescine N-methyltransferase 2 (353 aa).

The interval 15–50 (KSGAIPMNGHHNGTSKHQNGHKNGTSEQQNGTISLD) is disordered. The span at 25-50 (HNGTSKHQNGHKNGTSEQQNGTISLD) shows a compositional bias: polar residues. Residues 64–301 (PGWFSEFSAL…GVIGYMLCST (238 aa)) form the PABS domain. S-adenosyl-L-methionine-binding positions include glutamine 95, glutamate 170, and 201–202 (DG). The Proton acceptor role is filled by aspartate 220. Tyrosine 289 serves as a coordination point for S-adenosyl-L-methionine.

The protein belongs to the class I-like SAM-binding methyltransferase superfamily. Putrescine methyltransferase family. In terms of tissue distribution, predominantly expressed in roots.

It carries out the reaction putrescine + S-adenosyl-L-methionine = N-methylputrescine + S-adenosyl-L-homocysteine + H(+). Its pathway is alkaloid biosynthesis; nicotine biosynthesis. Involved in the biosynthesis of pyridine alkaloid natural products, leading mainly to the production of anabasine, anatabine, nicotine and nornicotine, effective deterrents against herbivores with antiparasitic and pesticide properties (neurotoxins); nornicotine serves as the precursor in the synthesis of the carcinogen compound N'-nitrosonornicotine (NNN). Methyltransferase that mediates the conversion of putrescine to N-methylputrescine. Promotes leaves ripening. The protein is Putrescine N-methyltransferase 2 of Nicotiana tabacum (Common tobacco).